Here is a 426-residue protein sequence, read N- to C-terminus: MKQLRLEPVVQVRGEINIPGSKSISNRALLLATLAQGTTTLTNLLDSDDIRHMLASLKQLGVNYRLSQNNTVCELDGLGGVISSASAQELFLGNAGTAMRPLCAALTLGQGEFTLTGEPRMEERPIGDLVDALRKLGANVVYLKNDGFPPLTINATGLNGGDVEIAGDLSSQFLTALLMVAPLAKGSVNIHVKGELVSKPYIDITIALMAQFGVNVINHDYARFEIVAGQRYISPCKVLVEGDASSASYFLAAGAIKGGEVKVTGVGRLSIQGDVKFADVLEKMGADIEWGDDYIIARGSPLTAVDLDMNHIPDAAMTIATAALFAKGTTVIRNIYNWRIKETDRLAAMATELRKVGAEVEEGNDYIKITPPAVINTAEIDTYNDHRMAMCFSMLAFADCGITINDPDCTSKTFPDYFKQFASLQG.

The 3-phosphoshikimate site is built by lysine 22, serine 23, and arginine 27. Lysine 22 serves as a coordination point for phosphoenolpyruvate. The phosphoenolpyruvate site is built by glycine 96 and arginine 124. Residues serine 170, serine 171, glutamine 172, serine 198, aspartate 314, asparagine 337, and lysine 341 each contribute to the 3-phosphoshikimate site. Position 172 (glutamine 172) interacts with phosphoenolpyruvate. The active-site Proton acceptor is the aspartate 314. Residues arginine 345, arginine 387, and lysine 412 each coordinate phosphoenolpyruvate.

The protein belongs to the EPSP synthase family. Monomer.

The protein localises to the cytoplasm. The catalysed reaction is 3-phosphoshikimate + phosphoenolpyruvate = 5-O-(1-carboxyvinyl)-3-phosphoshikimate + phosphate. The protein operates within metabolic intermediate biosynthesis; chorismate biosynthesis; chorismate from D-erythrose 4-phosphate and phosphoenolpyruvate: step 6/7. Its function is as follows. Catalyzes the transfer of the enolpyruvyl moiety of phosphoenolpyruvate (PEP) to the 5-hydroxyl of shikimate-3-phosphate (S3P) to produce enolpyruvyl shikimate-3-phosphate and inorganic phosphate. This chain is 3-phosphoshikimate 1-carboxyvinyltransferase, found in Shewanella sp. (strain W3-18-1).